We begin with the raw amino-acid sequence, 224 residues long: Proline/serine-rich protein C17A5.10 (224 aa).

The span at 1 to 10 (MTDDSVPPPS) shows a compositional bias: pro residues. The tract at residues 1–110 (MTDDSVPPPS…SNYNTAKPPY (110 aa)) is disordered. The segment covering 31–52 (TSTSAGHPSSSSSTLPNYAASS) has biased composition (low complexity). 3 stretches are compositionally biased toward polar residues: residues 53–68 (LNSR…NAYS), 77–94 (PTSQ…STMY), and 101–110 (SNYNTAKPPY).

This sequence belongs to the HUA1 family.

Its subcellular location is the cytoplasm. Functionally, may be involved in assembly and disassembly of the actin cytoskeleton. The protein is Proline/serine-rich protein C17A5.10 of Schizosaccharomyces pombe (strain 972 / ATCC 24843) (Fission yeast).